Here is a 424-residue protein sequence, read N- to C-terminus: GTPase Obg (424 aa).

Positions 1 to 158 (MFIDTAKIFV…RWIKLELKLL (158 aa)) constitute an Obg domain. The OBG-type G domain maps to 159–331 (ADVGLIGFPN…LMKEAARLLS (173 aa)). Residues 165 to 172 (GFPNVGKS), 190 to 194 (FTTLK), 212 to 215 (DIPG), 282 to 285 (NKSD), and 312 to 314 (SAA) contribute to the GTP site. Mg(2+)-binding residues include S172 and T192. Residues 345–424 (RFIEEEKRFT…LNDFEFDFLL (80 aa)) enclose the OCT domain.

It belongs to the TRAFAC class OBG-HflX-like GTPase superfamily. OBG GTPase family. In terms of assembly, monomer. Requires Mg(2+) as cofactor.

It is found in the cytoplasm. An essential GTPase which binds GTP, GDP and possibly (p)ppGpp with moderate affinity, with high nucleotide exchange rates and a fairly low GTP hydrolysis rate. Plays a role in control of the cell cycle, stress response, ribosome biogenesis and in those bacteria that undergo differentiation, in morphogenesis control. The polypeptide is GTPase Obg (Clostridium botulinum (strain Okra / Type B1)).